Here is a 220-residue protein sequence, read N- to C-terminus: Peptide methionine sulfoxide reductase MsrA (220 aa).

Cysteine 54 is an active-site residue.

The protein belongs to the MsrA Met sulfoxide reductase family.

It carries out the reaction L-methionyl-[protein] + [thioredoxin]-disulfide + H2O = L-methionyl-(S)-S-oxide-[protein] + [thioredoxin]-dithiol. The catalysed reaction is [thioredoxin]-disulfide + L-methionine + H2O = L-methionine (S)-S-oxide + [thioredoxin]-dithiol. Functionally, has an important function as a repair enzyme for proteins that have been inactivated by oxidation. Catalyzes the reversible oxidation-reduction of methionine sulfoxide in proteins to methionine. The chain is Peptide methionine sulfoxide reductase MsrA from Salinispora tropica (strain ATCC BAA-916 / DSM 44818 / JCM 13857 / NBRC 105044 / CNB-440).